The sequence spans 569 residues: Urease subunit beta (569 aa).

A Urease domain is found at 131–569; that stretch reads GGIDTHIHFI…VSLGQLYCLF (439 aa). Ni(2+)-binding residues include histidine 136, histidine 138, and lysine 219. Residue lysine 219 is modified to N6-carboxylysine. Residue histidine 221 coordinates substrate. Ni(2+) is bound by residues histidine 248 and histidine 274. Histidine 322 functions as the Proton donor in the catalytic mechanism. Aspartate 362 is a Ni(2+) binding site.

Belongs to the metallo-dependent hydrolases superfamily. Urease alpha subunit family. In terms of assembly, heterohexamer of 3 UreA (alpha) and 3 UreB (beta) subunits. The cofactor is Ni cation. Post-translationally, carboxylation allows a single lysine to coordinate two nickel ions.

It localises to the cytoplasm. The enzyme catalyses urea + 2 H2O + H(+) = hydrogencarbonate + 2 NH4(+). The protein operates within nitrogen metabolism; urea degradation; CO(2) and NH(3) from urea (urease route): step 1/1. The polypeptide is Urease subunit beta (Helicobacter hepaticus (strain ATCC 51449 / 3B1)).